The primary structure comprises 488 residues: Proline--tRNA ligase (488 aa).

This sequence belongs to the class-II aminoacyl-tRNA synthetase family. ProS type 3 subfamily. Homodimer.

The protein resides in the cytoplasm. It catalyses the reaction tRNA(Pro) + L-proline + ATP = L-prolyl-tRNA(Pro) + AMP + diphosphate. Its function is as follows. Catalyzes the attachment of proline to tRNA(Pro) in a two-step reaction: proline is first activated by ATP to form Pro-AMP and then transferred to the acceptor end of tRNA(Pro). The polypeptide is Proline--tRNA ligase (Pyrobaculum arsenaticum (strain DSM 13514 / JCM 11321 / PZ6)).